Reading from the N-terminus, the 347-residue chain is Dihydroorotase (347 aa).

Residues H14 and H16 each coordinate Zn(2+). Substrate is bound by residues 16–18 (HLR) and N42. Zn(2+)-binding residues include K100, H137, and H175. An N6-carboxylysine modification is found at K100. Residue H137 coordinates substrate. Substrate is bound at residue L220. Position 248 (D248) interacts with Zn(2+). Residue D248 is part of the active site. H252 and A264 together coordinate substrate.

The protein belongs to the metallo-dependent hydrolases superfamily. DHOase family. Class II DHOase subfamily. Homodimer. The cofactor is Zn(2+).

It carries out the reaction (S)-dihydroorotate + H2O = N-carbamoyl-L-aspartate + H(+). It functions in the pathway pyrimidine metabolism; UMP biosynthesis via de novo pathway; (S)-dihydroorotate from bicarbonate: step 3/3. Functionally, catalyzes the reversible cyclization of carbamoyl aspartate to dihydroorotate. This is Dihydroorotase from Stutzerimonas stutzeri (strain A1501) (Pseudomonas stutzeri).